The primary structure comprises 721 residues: Phosphoribosylformylglycinamidine synthase subunit PurL (721 aa).

Residue His-47 is part of the active site. The ATP site is built by Tyr-50 and Lys-89. Glu-91 provides a ligand contact to Mg(2+). Residues 92 to 95 (SHNH) and Arg-114 contribute to the substrate site. Residue His-93 is the Proton acceptor of the active site. Position 115 (Asp-115) interacts with Mg(2+). Substrate is bound at residue Gln-238. A Mg(2+)-binding site is contributed by Asp-266. Residue 310 to 312 (ESQ) coordinates substrate. Residues Asp-490 and Gly-527 each coordinate ATP. Residue Asn-528 coordinates Mg(2+). Ser-530 lines the substrate pocket.

Belongs to the FGAMS family. In terms of assembly, monomer. Part of the FGAM synthase complex composed of 1 PurL, 1 PurQ and 2 PurS subunits.

The protein resides in the cytoplasm. It catalyses the reaction N(2)-formyl-N(1)-(5-phospho-beta-D-ribosyl)glycinamide + L-glutamine + ATP + H2O = 2-formamido-N(1)-(5-O-phospho-beta-D-ribosyl)acetamidine + L-glutamate + ADP + phosphate + H(+). It functions in the pathway purine metabolism; IMP biosynthesis via de novo pathway; 5-amino-1-(5-phospho-D-ribosyl)imidazole from N(2)-formyl-N(1)-(5-phospho-D-ribosyl)glycinamide: step 1/2. Part of the phosphoribosylformylglycinamidine synthase complex involved in the purines biosynthetic pathway. Catalyzes the ATP-dependent conversion of formylglycinamide ribonucleotide (FGAR) and glutamine to yield formylglycinamidine ribonucleotide (FGAM) and glutamate. The FGAM synthase complex is composed of three subunits. PurQ produces an ammonia molecule by converting glutamine to glutamate. PurL transfers the ammonia molecule to FGAR to form FGAM in an ATP-dependent manner. PurS interacts with PurQ and PurL and is thought to assist in the transfer of the ammonia molecule from PurQ to PurL. The sequence is that of Phosphoribosylformylglycinamidine synthase subunit PurL from Ruegeria sp. (strain TM1040) (Silicibacter sp.).